Here is a 536-residue protein sequence, read N- to C-terminus: Cytochrome P450 monooxygenase fscF (536 aa).

Residues 9 to 29 (VSWLCALFTAIALYCIAVAFY) traverse the membrane as a helical segment. A heme-binding site is contributed by C464.

It belongs to the cytochrome P450 family. It depends on heme as a cofactor.

It is found in the membrane. The protein operates within secondary metabolite biosynthesis. Functionally, cytochrome P450 monooxygenase; part of the fragmented gene cluster that mediates the biosynthesis of fusarochromene, a tryptophan-derived metabolite closely related to a group of mycotoxins including fusarochromanone. Within the pathway, fscF catalyzes the epoxidation of desacetylfusarochromene which opens the way to the production of fusarochromanones. The first step of the pathway is the epimerization of L-tryptophan to D-tryptophan in the presence of the NRPS-like tryptophan epimerase fscC. D-tryptophan is subsequently hydroxylated by the tryptophan 6-hydroxylase fscE to yield 6-hydroxytryptophan. The pyrrole ring undergoes cleavaged by the tryptophan 2,3-dioxygenase fscD and is finally converted to 4-hydroxykyrunenine by the hydrolase fscH. The NRPS-like oxidoreductase fscA reduces the carboxyl group to primary alcohol and the DMATS-type prenyltransferase fscG performs prenylation, followed by the formation of a chromene ring catalyzed by the oxidoreductase fscI, which leads to desacetylfusarochromene. Epoxidation by fscF and rearrangement reactions of chromene double bonds convert compound desacetylfusarochromene to fusarochromanones. Although specific acetyltransferases were not found near the fsc gene cluster, several predicted enzymes containing the N-acetyltransferase superfamily domain are present in the genome of F.equiseti. These predicted enzymes may have the potential to convert desacetylfusarochromene to fusarochromene. In Fusarium equiseti (Fusarium scirpi), this protein is Cytochrome P450 monooxygenase fscF.